The primary structure comprises 239 residues: tRNA (guanine-N(7)-)-methyltransferase (239 aa).

S-adenosyl-L-methionine is bound by residues glutamate 69, glutamate 94, aspartate 121, and aspartate 144. The active site involves aspartate 144. Substrate is bound by residues lysine 148, aspartate 180, and 217-220 (TNFE).

It belongs to the class I-like SAM-binding methyltransferase superfamily. TrmB family. As to quaternary structure, monomer.

The enzyme catalyses guanosine(46) in tRNA + S-adenosyl-L-methionine = N(7)-methylguanosine(46) in tRNA + S-adenosyl-L-homocysteine. It functions in the pathway tRNA modification; N(7)-methylguanine-tRNA biosynthesis. Catalyzes the formation of N(7)-methylguanine at position 46 (m7G46) in tRNA. In Buchnera aphidicola subsp. Schizaphis graminum (strain Sg), this protein is tRNA (guanine-N(7)-)-methyltransferase.